The following is a 450-amino-acid chain: Cell division cycle 20.5, cofactor of APC complex (450 aa).

7 WD repeats span residues 129–166 (ADDF…TYKL), 171–210 (EEEG…QVRT), 214–251 (GHES…SIVE), 255–294 (GHTE…SSNP), 304–346 (EHTA…CLNS), 348–389 (ETGS…KMAE), and 392–431 (GHTS…PKTT).

The protein belongs to the WD repeat CDC20/Fizzy family. The APC/C is composed of at least 11 subunits that stay tightly associated throughout the cell cycle. Binds to GIG1 and PYM. Part of the mitotic checkpoint complex (MCC); interacts with MAD2 and BUB1.

It is found in the nucleus. Its pathway is protein modification; protein ubiquitination. Its function is as follows. Component of the anaphase promoting complex/cyclosome (APC/C), a cell cycle-regulated E3 ubiquitin-protein ligase complex that controls progression through mitosis and the G1 phase of the cell cycle. The chain is Cell division cycle 20.5, cofactor of APC complex (CDC20-5) from Arabidopsis thaliana (Mouse-ear cress).